We begin with the raw amino-acid sequence, 356 residues long: DNA polymerase IV (356 aa).

Residues 6-187 form the UmuC domain; that stretch reads IIHIDMDAFY…QPIRRLHGVG (182 aa). Mg(2+) is bound by residues D10 and D105. Residue E106 is part of the active site.

This sequence belongs to the DNA polymerase type-Y family. As to quaternary structure, monomer. It depends on Mg(2+) as a cofactor.

The protein resides in the cytoplasm. It catalyses the reaction DNA(n) + a 2'-deoxyribonucleoside 5'-triphosphate = DNA(n+1) + diphosphate. Functionally, poorly processive, error-prone DNA polymerase involved in untargeted mutagenesis. Copies undamaged DNA at stalled replication forks, which arise in vivo from mismatched or misaligned primer ends. These misaligned primers can be extended by PolIV. Exhibits no 3'-5' exonuclease (proofreading) activity. May be involved in translesional synthesis, in conjunction with the beta clamp from PolIII. This is DNA polymerase IV from Halorhodospira halophila (strain DSM 244 / SL1) (Ectothiorhodospira halophila (strain DSM 244 / SL1)).